A 1204-amino-acid polypeptide reads, in one-letter code: MTNFTKEQDQAINDAGKDILVSASAGSGKTTVLVERVLKKILSGTPVSSLLIITFTKAAAREMKERIKQKISDQLEIEPDNQFLRSQLLDVDTANISTIDSFCLDVIRRFYYVIDLDPQFSVLTDETQAELLKERALREIEADYLEGDNQDFQDFYDNFSGDRDAEGARNLLLQLYNTATTEPNYEKFLDNLPTCYEVGDNLIRSNLWQQQIKPLLLKEISDLKAEVEALLAEPEINSSDLVKVKENYDIFSNRLDSFWESLNTDQPYNEIRANLMNCKFEKAVRKSKKWSDESIEVYQDSQDLKLDLNDQLKKIFASFFVVEEKEQIAVLQKSEKIVKTIVAAEKKLIQKFSQLKREQNLIDYSDMEQFAFSILTTDTSNAHIAQEYYQEKFNEILIDEYQDVNALQENIIKAIKKKGQNTLFMVGDVKQSIYGFRQARPDLFLSKYHTYGKDNDSEKIILADNFRSTKRVTKTVNDLFNPILTTNFGGIDYKKEGQLQFGASYYPSDLPTASEYIFTDKKQTQSAYEDQYGDEMDFSEVQMVIARIKQLKAENFQVWDRRTQLKRPLEYSDIAIITRTRSDNLQVMQEFAKADLPLFVTDAQNYFQTFELIMIMNYLRLIDNPQQDIPLVAVMRSPLFNFKEPELAQIRVKTPAGNFYTALTSFASVNSSLGKKCKEFLQQLETLRSFAATHRISELIWSIYEKTHLLEIVTGLPNGQQRRVNLESLYERATSYESAGFKGLYQFISFIERMRKNQKDLAQPLLSDKADNAVKLMTIHASKGLEFPIVFVMGLGHQYQTRDLSGNFTISQNELGLTIKEKNYRIDSLVKSLADVQKRQQMLEEEARILYVGLTRAQQKLILVASVNEIENKRKKWVSELDQKKDIIPLVKKINAQSPLDFLGPKLEQKHEFDQTIRDMTSALEEQDKLYYLKFNLDLEPEKIKDQNEDSQEVNSNVNKVVKELYNFKYPFEDATKTTAYQSVSEIKKAFNDPIDTELENSRLISSSNRYLQPIDETPTFLEGQKFTGAEIGTAMHLVLQYYNYEGNKDQENLDQEIDQLVELGKLNSLMVPHLSKEALNWFVMSDFAKEFWKQPDKLHRESQFSSLVNASELFNDFSDPSAKVLVHGTVDGYFEAKDGLILFDYKTDFVDKTNEEQAIEKIKQKYTGQLRLYEQALNEMNNDKKVIGKYLILLDARKVVPVD.

The region spanning 2-469 is the UvrD-like helicase ATP-binding domain; it reads TNFTKEQDQA…IILADNFRST (468 aa). 23 to 30 contributes to the ATP binding site; the sequence is ASAGSGKT. One can recognise a UvrD-like helicase C-terminal domain in the interval 497–784; that stretch reads GQLQFGASYY…KLMTIHASKG (288 aa).

The protein belongs to the helicase family. AddA subfamily. Heterodimer of AddA and AddB/RexB. The cofactor is Mg(2+).

The enzyme catalyses Couples ATP hydrolysis with the unwinding of duplex DNA by translocating in the 3'-5' direction.. The catalysed reaction is ATP + H2O = ADP + phosphate + H(+). Its function is as follows. The heterodimer acts as both an ATP-dependent DNA helicase and an ATP-dependent, dual-direction single-stranded exonuclease. Recognizes the chi site generating a DNA molecule suitable for the initiation of homologous recombination. The AddA nuclease domain is required for chi fragment generation; this subunit has the helicase and 3' -&gt; 5' nuclease activities. The chain is ATP-dependent helicase/nuclease subunit A from Lactobacillus gasseri (strain ATCC 33323 / DSM 20243 / BCRC 14619 / CIP 102991 / JCM 1131 / KCTC 3163 / NCIMB 11718 / NCTC 13722 / AM63).